A 2493-amino-acid polypeptide reads, in one-letter code: Adenylate cyclase (2493 aa).

5 stretches are compositionally biased toward polar residues: residues 1-18 (MLFT…SPEQ), 42-51 (RDSNGSSNFT), 60-78 (SQQY…QPDI), 129-147 (PANS…SISP), and 197-210 (APFS…TSVN). Disordered stretches follow at residues 1–85 (MLFT…SSTL), 99–148 (FEHA…ISPS), 197–325 (APFS…SSLS), 355–444 (NSPS…QSQS), 475–565 (GSIT…VNML), 616–660 (QAPV…KTSY), 753–832 (NVGE…GSKS), 854–882 (ALVQ…GAGA), and 904–967 (RPSK…ATGT). Residues 211–233 (PSAASTASPSTSAATRTRPRGGT) are compositionally biased toward low complexity. 2 stretches are compositionally biased toward polar residues: residues 234-246 (NASQ…TSFG) and 253-264 (LSSSRSQYSLRP). Composition is skewed to basic residues over residues 287-303 (AVKK…KKSS) and 404-422 (HLKK…HLAK). Residues 425-434 (KPGEDADSAR) show a composition bias toward basic and acidic residues. Residues 500–525 (PSPSQTPIAERQTSVTSTVESPSHAS) are compositionally biased toward polar residues. Residues 534-555 (SLRTPSRTTASTSTSSASTVLS) are compositionally biased toward low complexity. A compositionally biased stretch (basic and acidic residues) spans 630–640 (TDSELSDRKDS). The segment covering 641 to 660 (VVSTHSMRSNHSGISPKTSY) has biased composition (polar residues). Residues 754–763 (VGEEEDDDDD) show a composition bias toward acidic residues. Composition is skewed to low complexity over residues 780–791 (SSSGISSTHASS) and 854–870 (ALVQ…QPSP). The span at 913 to 935 (RPNTAGSVGATRPSTTTLGSTLS) shows a compositional bias: polar residues. The Ras-associating domain maps to 970-1072 (RNHFIRVYKT…LRFVFRPDSV (103 aa)). LRR repeat units follow at residues 1086 to 1107 (TFQH…LYKH), 1110 to 1132 (WIVS…VQLC), 1134 to 1155 (SLRT…VRHS), 1157 to 1178 (TLTH…SLDL), 1181 to 1202 (ELMS…FSSI), 1204 to 1225 (TLRN…ICDV), 1227 to 1248 (SLVD…IANL), 1250 to 1271 (NLER…MSEL), 1273 to 1294 (SLRT…LGLP), 1295 to 1316 (RLQN…LGPQ), 1317 to 1336 (LTQV…AALT), 1339 to 1360 (DLTS…LFPQ), 1363 to 1385 (ALVK…GDLK), 1386 to 1407 (RLEM…IGDL), 1409 to 1430 (ALKE…LWLC), 1432 to 1453 (SLAH…PDIR), 1511 to 1534 (SLQK…SELT), 1535 to 1556 (SLEV…SLQT), 1559 to 1580 (KLRE…DLVV), 1583 to 1605 (ELRI…GKLK), 1606 to 1628 (KLAN…HYDW), and 1635 to 1654 (ELRY…TKLS). Positions 1710–2000 (AYGIADALGK…ESIMVMVISV (291 aa)) constitute a PPM-type phosphatase domain. In terms of domain architecture, Guanylate cyclase spans 2058-2194 (ALVFTDIKNS…PMVNRAARIS (137 aa)). Positions 2063 and 2105 each coordinate Mg(2+). 3 disordered regions span residues 2220–2241 (DESS…TEEE), 2354–2378 (EADR…HGTA), and 2467–2493 (PPRA…ELVP). The span at 2470–2485 (ASTSALSLPSPRTSPR) shows a compositional bias: polar residues.

This sequence belongs to the adenylyl cyclase class-3 family. It depends on Mg(2+) as a cofactor.

The enzyme catalyses ATP = 3',5'-cyclic AMP + diphosphate. Its function is as follows. Plays essential roles in regulation of cellular metabolism by catalyzing the synthesis of a second messenger, cAMP. The polypeptide is Adenylate cyclase (UAC1) (Mycosarcoma maydis (Corn smut fungus)).